A 358-amino-acid polypeptide reads, in one-letter code: Nicotinate-nucleotide--dimethylbenzimidazole phosphoribosyltransferase (358 aa).

E314 functions as the Proton acceptor in the catalytic mechanism.

It belongs to the CobT family.

The catalysed reaction is 5,6-dimethylbenzimidazole + nicotinate beta-D-ribonucleotide = alpha-ribazole 5'-phosphate + nicotinate + H(+). Its pathway is nucleoside biosynthesis; alpha-ribazole biosynthesis; alpha-ribazole from 5,6-dimethylbenzimidazole: step 1/2. In terms of biological role, catalyzes the synthesis of alpha-ribazole-5'-phosphate from nicotinate mononucleotide (NAMN) and 5,6-dimethylbenzimidazole (DMB). In Mycobacterium ulcerans (strain Agy99), this protein is Nicotinate-nucleotide--dimethylbenzimidazole phosphoribosyltransferase.